The chain runs to 91 residues: Small ribosomal subunit protein bS6 (91 aa).

It belongs to the bacterial ribosomal protein bS6 family.

In terms of biological role, binds together with bS18 to 16S ribosomal RNA. This is Small ribosomal subunit protein bS6 from Leptospira biflexa serovar Patoc (strain Patoc 1 / Ames).